Consider the following 691-residue polypeptide: Lectin-domain containing receptor kinase VI.4 (691 aa).

The N-terminal stretch at 1 to 19 is a signal peptide; that stretch reads MGRAKSMVSLLLVLFLVRA. The Extracellular segment spans residues 20 to 306; that stretch reads HVATTETTTE…AKKRGYNGKV (287 aa). The tract at residues 26–273 is legume-lectin like; that stretch reads TTTEFIFHGF…AHYVMGWSFA (248 aa). Residues 307–327 traverse the membrane as a helical segment; the sequence is IALIVALSTVISIMLVLLFLF. The Cytoplasmic segment spans residues 328 to 691; sequence MMYKKRMQQE…ISSTSLISGR (364 aa). Positions 363–641 constitute a Protein kinase domain; sequence FKENRVVGTG…LNRDEDVPEI (279 aa). ATP is bound by residues 369 to 377 and Lys-392; that span reads VGTGGFGIV. Asp-491 serves as the catalytic Proton acceptor.

In the C-terminal section; belongs to the protein kinase superfamily. Ser/Thr protein kinase family. The protein in the N-terminal section; belongs to the leguminous lectin family.

Its subcellular location is the cell membrane. It carries out the reaction L-seryl-[protein] + ATP = O-phospho-L-seryl-[protein] + ADP + H(+). The enzyme catalyses L-threonyl-[protein] + ATP = O-phospho-L-threonyl-[protein] + ADP + H(+). Involved in negative regulation of abscisic acid response in seed germination. This chain is Lectin-domain containing receptor kinase VI.4 (LECRK64), found in Arabidopsis thaliana (Mouse-ear cress).